Consider the following 325-residue polypeptide: Cytochrome c biogenesis protein CcsA (325 aa).

8 helical membrane-spanning segments follow: residues 14–34, 36–56, 68–88, 97–117, 142–162, 233–253, 260–280, and 294–314; these read TFAILLPTLLCYWTGVAFPNL, GLPAIGTAGMAIANLCMAALL, ISNLYESLFFLAWGLTAIHLL, LVGAATSPLALGIVAFAAFTL, VMMVSYAALLVGSLLSVAFLV, VIGLGFPLLTIGIIAGAVWAN, WSWDPKETWALITWLVFAAYL, and AILATVGFGVVWVCYLGVNLL.

It belongs to the CcmF/CycK/Ccl1/NrfE/CcsA family. May interact with ccs1.

The protein resides in the cellular thylakoid membrane. Required during biogenesis of c-type cytochromes (cytochrome c6 and cytochrome f) at the step of heme attachment. This chain is Cytochrome c biogenesis protein CcsA, found in Synechococcus sp. (strain ATCC 27144 / PCC 6301 / SAUG 1402/1) (Anacystis nidulans).